A 181-amino-acid polypeptide reads, in one-letter code: Ribosome maturation factor RimM (181 aa).

A PRC barrel domain is found at 98-172; sequence EDEFYFEDLI…RIVIPELSLW (75 aa).

The protein belongs to the RimM family. As to quaternary structure, binds ribosomal protein uS19.

Its subcellular location is the cytoplasm. Functionally, an accessory protein needed during the final step in the assembly of 30S ribosomal subunit, possibly for assembly of the head region. Essential for efficient processing of 16S rRNA. May be needed both before and after RbfA during the maturation of 16S rRNA. It has affinity for free ribosomal 30S subunits but not for 70S ribosomes. The protein is Ribosome maturation factor RimM of Hyphomonas neptunium (strain ATCC 15444).